Here is a 154-residue protein sequence, read N- to C-terminus: Myoglobin (154 aa).

In terms of domain architecture, Globin spans 2–148; it reads GLSDGEWQLV…FRNDIAAKYK (147 aa). A Phosphoserine modification is found at Ser-4. His-65 contacts nitrite. O2 is bound at residue His-65. Position 68 is a phosphothreonine (Thr-68). His-94 is a binding site for heme b.

Belongs to the globin family. Monomeric.

It is found in the cytoplasm. It localises to the sarcoplasm. The enzyme catalyses Fe(III)-heme b-[protein] + nitric oxide + H2O = Fe(II)-heme b-[protein] + nitrite + 2 H(+). It catalyses the reaction H2O2 + AH2 = A + 2 H2O. Its function is as follows. Monomeric heme protein which primary function is to store oxygen and facilitate its diffusion within muscle tissues. Reversibly binds oxygen through a pentacoordinated heme iron and enables its timely and efficient release as needed during periods of heightened demand. Depending on the oxidative conditions of tissues and cells, and in addition to its ability to bind oxygen, it also has a nitrite reductase activity whereby it regulates the production of bioactive nitric oxide. Under stress conditions, like hypoxia and anoxia, it also protects cells against reactive oxygen species thanks to its pseudoperoxidase activity. In Vulpes chama (Cape fox), this protein is Myoglobin (MB).